A 461-amino-acid chain; its full sequence is uncharacterized protein (461 aa).

LRR repeat units follow at residues 119–140 (NVKKLNLWGCGIDDIQVCEKMS), 141–162 (LLEVLSLSVNEVKSLAPLQHCK), and 163–184 (NLKEVYLRKNCLESLDELEYLK). Positions 197 to 237 (NPCVGEGGQEYRRKVIRVLPNLTKLDDKPVTTTDHQEAIED) constitute an LRRCT domain.

This is an uncharacterized protein from Caenorhabditis elegans.